Reading from the N-terminus, the 319-residue chain is Probable murein peptide carboxypeptidase (319 aa).

Ser-116 functions as the Nucleophile in the catalytic mechanism. Catalysis depends on charge relay system residues Glu-214 and His-284.

Belongs to the peptidase S66 family.

The protein localises to the cytoplasm. The protein operates within cell wall degradation; peptidoglycan degradation. Functionally, may be involved in the degradation of peptidoglycan by catalyzing the cleavage of the terminal D-alanine residue from cytoplasmic murein peptides. In Bacillus subtilis (strain 168), this protein is Probable murein peptide carboxypeptidase (ykfA).